A 360-amino-acid chain; its full sequence is MKYRSNETFTHKQADKIGVLITNLGTPEAPEKGALKRYLREFLSDTRVVEVPKLIWWMILNLVILNIRPKRSAHAYSTVWTDRGSPLMFHTQDQTNALATSMQQKYGDKVVVDFAMRYGSPSIESVTQNMLEKGVRQLLVLPLYPQYSGATNGSTFDALGEVLRKTRWIPDVRFISHYHDFTPYIDAVAGSITEHWATHGRADKLIFTYHGIPKRYLTAGDPYHCECYKTSRLVAEKLGLGKHEYMVTFQSRFGREEWLQPYTDHTLKSLPEQGVKSVQMICPGFSADCLETIEEIGIENRDYFLEAGGQRYEYIAALNAQPQHIAALESLIEKNLGGWECPDRNSQLSADLATAMGSDK.

Residues His210 and Glu291 each contribute to the Fe cation site.

It belongs to the ferrochelatase family.

It is found in the cytoplasm. The catalysed reaction is heme b + 2 H(+) = protoporphyrin IX + Fe(2+). Its pathway is porphyrin-containing compound metabolism; protoheme biosynthesis; protoheme from protoporphyrin-IX: step 1/1. Catalyzes the ferrous insertion into protoporphyrin IX. The polypeptide is Ferrochelatase (Pseudoalteromonas atlantica (strain T6c / ATCC BAA-1087)).